The chain runs to 2924 residues: Probable polyketide synthase 6 (2924 aa).

In terms of domain architecture, Ketosynthase family 3 (KS3) spans 11 to 442; it reads EKGVAIVGIG…GSNCCLLISE (432 aa). Catalysis depends on for beta-ketoacyl synthase activity residues Cys-181, His-323, and His-362. An acyl/malonyl transferase region spans residues 635–668; the sequence is GVNPSFILGHSLGEISASYCSGMIDLDTFCYTVY. The active-site For acyl/malonyl transferase activity is Ser-645. The tract at residues 925–1047 is N-terminal hotdog fold; that stretch reads IDHLGLSNSY…SNFQLLDHGN (123 aa). The region spanning 925 to 1210 is the PKS/mFAS DH domain; sequence IDHLGLSNSY…CKSLIPIKDS (286 aa). Catalysis depends on His-959, which acts as the Proton acceptor; for dehydratase activity. The tract at residues 1064 to 1210 is C-terminal hotdog fold; sequence NLSKLTKNEL…CKSLIPIKDS (147 aa). Asp-1122 functions as the Proton donor; for dehydratase activity in the catalytic mechanism. In terms of domain architecture, Carrier spans 2431–2508; sequence TGNKNIDELF…ISIKMILNSL (78 aa). O-(pantetheine 4'-phosphoryl)serine is present on Ser-2468. Residues 2551 to 2571 form a helical membrane-spanning segment; it reads KIILLTGTTGFLGGFLLFNML.

The cofactor is pantetheine 4'-phosphate.

The protein localises to the membrane. Its function is as follows. Probable polyketide synthase. The protein is Probable polyketide synthase 6 (pks6) of Dictyostelium discoideum (Social amoeba).